The chain runs to 266 residues: Early E1A protein (266 aa).

The interaction with RB1 in competition with E2F1 stretch occupies residues 39–47; sequence PSLYELYDL. An interaction with UBE2I region spans residues 75 to 145; sequence EGLFLPEPPV…AAAAADRERE (71 aa). Residues 98–102 carry the PXLXP motif, interaction with host ZMYND11 motif; that stretch reads PQLHP. The short motif at 107–111 is the LXCXE motif, interaction with host RB1 and TMEM173/STING element; the sequence is LLCYE. The segment at 159–179 is a zinc-finger region; that stretch reads CKSCEHHRNSTGNTDLMCSLC. The interval 195–226 is disordered; it reads NEPEPNSTLDGDERPSPPKLGSAVPEGVIKPV. The PXDLS motif, CTBP-binding signature appears at 255–259; that stretch reads PVDLS. A Nuclear localization signal motif is present at residues 261-265; sequence KRPRC.

The protein belongs to the adenoviridae E1A protein family. In terms of assembly, interacts with host UBE2I; this interaction interferes with polySUMOylation. Interacts with host RB1; this interaction induces the aberrant dissociation of RB1-E2F1 complex thereby disrupting the activity of RB1 and activating E2F1-regulated genes. Interacts with host ATF7; the interaction enhances ATF7-mediated viral transactivation activity which requires the zinc binding domains of both proteins. Isoform early E1A 32 kDa protein and isoform early E1A 26 kDa protein interact (via N-terminus) with CUL1 and E3 ubiquitin ligase RBX1; these interactions inhibit RBX1-CUL1-dependent elongation reaction of ubiquitin chains and attenuate ubiquitination of SCF(FBXW7) target proteins. Interacts (via PXLXP motif) with host ZMYND11/BS69 (via MYND-type zinc finger); this interaction inhibits E1A mediated transactivation. Interacts with host EP300; this interaction stimulates the acetylation of RB1 by recruiting EP300 and RB1 into a multimeric-protein complex. Interacts with host CTBP1 and CTBP2; this interaction seems to potentiate viral replication. Interacts with host DCAF7. Interacts with host DYRK1A. Interacts with host KPNA4; this interaction allows E1A import into the host nucleus. Interacts with host EP400; this interaction stabilizes MYC. Interacts with host TBP protein; this interaction probably disrupts the TBP-TATA complex. Interacts (via LXCXE motif) with host TMEM173/STING; this interaction impairs the ability of TMEM173/STING to sense cytosolic DNA and promote the production of type I interferon (IFN-alpha and IFN-beta). Interacts (via C-terminus) with host ZBED1/hDREF (via C-terminus); the interaction is direct.

Its subcellular location is the host nucleus. Functionally, plays a role in viral genome replication by driving entry of quiescent cells into the cell cycle. Stimulation of progression from G1 to S phase allows the virus to efficiently use the cellular DNA replicating machinery to achieve viral genome replication. E1A protein has both transforming and trans-activating activities. Induces the disassembly of the E2F1 transcription factor from RB1 by direct competition for the same binding site on RB1, with subsequent transcriptional activation of E2F1-regulated S-phase genes and of the E2 region of the adenoviral genome. Release of E2F1 leads to the ARF-mediated inhibition of MDM2 and causes TP53/p53 to accumulate because it is not targeted for degradation by MDM2-mediated ubiquitination anymore. This increase in TP53, in turn, would arrest the cell proliferation and direct its death but this effect is counteracted by the viral protein E1B-55K. Inactivation of the ability of RB1 to arrest the cell cycle is critical for cellular transformation, uncontrolled cellular growth and proliferation induced by viral infection. Interaction with RBX1 and CUL1 inhibits ubiquitination of the proteins targeted by SCF(FBXW7) ubiquitin ligase complex, and may be linked to unregulated host cell proliferation. The tumorigenesis-restraining activity of E1A may be related to the disruption of the host CtBP-CtIP complex through the CtBP binding motif. Interaction with host TMEM173/STING impairs the ability of TMEM173/STING to sense cytosolic DNA and promote the production of type I interferon (IFN-alpha and IFN-beta). Promotes the sumoylation of host ZBED1/hDREF with SUMO1. In Homo sapiens (Human), this protein is Early E1A protein.